The sequence spans 350 residues: MALILGIESSCDETAAAVIDSNGASLEARIVAQRIASQDEAHRPYGGVVPEIAARAHAEVLSPMIAAVLADAGIGLDDLDAIAATAGPGLIGGVMVGLVTGKALAMAADKPLIAVNHLEGHALSPRLAEPSLQYPYLLLLVSGGHCQILEVAGVGQFRRLATTIDDALGEAFDKTAKILGLGYPGGPAVERMAREGNPKAVPLPRPLVGSGEPHFSFAGLKSAVMRAKDAGVHGDADIAASFQQAAIDCVIDRTRIALETASPGMTALVVAGGVAANAALRGALEGLAESHGLSLVAPPPKLCTDNAAMIGWAGAERLALGYVDPLDVAARPRWPLDENAAPVRGAGVKA.

His-117 and His-121 together coordinate Fe cation. Substrate contacts are provided by residues 140–144 (LVSGG), Asp-173, Gly-186, and Asn-277. Asp-305 serves as a coordination point for Fe cation.

This sequence belongs to the KAE1 / TsaD family. The cofactor is Fe(2+).

It is found in the cytoplasm. The enzyme catalyses L-threonylcarbamoyladenylate + adenosine(37) in tRNA = N(6)-L-threonylcarbamoyladenosine(37) in tRNA + AMP + H(+). In terms of biological role, required for the formation of a threonylcarbamoyl group on adenosine at position 37 (t(6)A37) in tRNAs that read codons beginning with adenine. Is involved in the transfer of the threonylcarbamoyl moiety of threonylcarbamoyl-AMP (TC-AMP) to the N6 group of A37, together with TsaE and TsaB. TsaD likely plays a direct catalytic role in this reaction. The chain is tRNA N6-adenosine threonylcarbamoyltransferase from Novosphingobium aromaticivorans (strain ATCC 700278 / DSM 12444 / CCUG 56034 / CIP 105152 / NBRC 16084 / F199).